Reading from the N-terminus, the 361-residue chain is KDEL-tailed cysteine endopeptidase CEP2 (361 aa).

The signal sequence occupies residues 1-20 (MKKLLLIFLFSLVILQTACG). The propeptide at 21–127 (FDYDDKEIES…FMYDHENLSK (107 aa)) is activation peptide. Residues Asn-75 and Asn-124 are each glycosylated (N-linked (GlcNAc...) asparagine). Cystine bridges form between Cys-149-Cys-191, Cys-183-Cys-224, and Cys-282-Cys-333. Residue Cys-152 is part of the active site. Catalysis depends on residues His-288 and Asn-308. Positions 358–361 (KDEL) match the Prevents secretion from ER motif.

It belongs to the peptidase C1 family. In terms of tissue distribution, expressed in roots, stems, rosette and cauline leaves, flowers, buds and green siliques. Found in the tip of young primary leaves, in very young root tips and at later stages in all tissues of lateral root, including the vascular bundle. Not expressed in lateral root primordia, while directly emerging through the epidermis.

The protein localises to the endoplasmic reticulum. Functionally, involved in the final stage of developmental programmed cell death and in intercalation of new cells. Cleaves extensins, thus probably supporting the final cell collapse. The protein is KDEL-tailed cysteine endopeptidase CEP2 of Arabidopsis thaliana (Mouse-ear cress).